A 482-amino-acid chain; its full sequence is D-inositol 3-phosphate glycosyltransferase (482 aa).

A 1D-myo-inositol 3-phosphate-binding site is contributed by His63. UDP-N-acetyl-alpha-D-glucosamine contacts are provided by residues 69-70 (QP) and Gly77. Residues 74-79 (DAGGMN), Lys132, Tyr165, Thr189, and Arg209 each bind 1D-myo-inositol 3-phosphate. UDP-N-acetyl-alpha-D-glucosamine is bound by residues Arg289, Lys294, and Gln355. Mg(2+) is bound by residues Tyr364, Arg365, and Ala367. 2 residues coordinate UDP-N-acetyl-alpha-D-glucosamine: Glu377 and Glu385. Thr391 is a binding site for Mg(2+).

Belongs to the glycosyltransferase group 1 family. MshA subfamily. In terms of assembly, homodimer.

It carries out the reaction 1D-myo-inositol 3-phosphate + UDP-N-acetyl-alpha-D-glucosamine = 1D-myo-inositol 2-acetamido-2-deoxy-alpha-D-glucopyranoside 3-phosphate + UDP + H(+). In terms of biological role, catalyzes the transfer of a N-acetyl-glucosamine moiety to 1D-myo-inositol 3-phosphate to produce 1D-myo-inositol 2-acetamido-2-deoxy-glucopyranoside 3-phosphate in the mycothiol biosynthesis pathway. The chain is D-inositol 3-phosphate glycosyltransferase from Salinispora tropica (strain ATCC BAA-916 / DSM 44818 / JCM 13857 / NBRC 105044 / CNB-440).